A 76-amino-acid polypeptide reads, in one-letter code: Senegalin (76 aa).

A signal peptide spans 1–22 (MLSLKKSMLLLFFLGMVSFSLA). The propeptide occupies 23–55 (NKRSDGKRADEEGEDKRADEEGEDKRADEEGED). The disordered stretch occupies residues 24–54 (KRSDGKRADEEGEDKRADEEGEDKRADEEGE). L75 bears the Leucine amide mark.

As to expression, expressed by the skin glands.

Its subcellular location is the secreted. Antimicrobial peptide with activity against the Gram-positive bacterium S.aureus NCTC 10788 (MIC=50 um) and the yeast C.albicans NCPF 1467 (MIC=150 uM). Ineffective against the Gram-negative bacterium E.coli NCTC 10418. Induces a dose-dependent contraction of rat urinary bladder smooth muscle (EC50=2.9 nM) and a dose-dependent relaxation of rat tail artery smooth muscle (EC50=37.7 nM). The chain is Senegalin from Kassina senegalensis (Senegal running frog).